A 297-amino-acid polypeptide reads, in one-letter code: MEDYIKIEKIGEGTYGVVYKGRHRTTGQIVAMKKIRLESEEEGVPSTAIREISLLKELRHPNIVSLQDVLMQDSRLYLIFEFLSMDLKKYLDSIPPGQFMDSSLVKSYLYQILQGIVFCHSRRVLHRDLKPQNLLIDDKGTIKLADFGLARAFGIPIRVYTHEVVTLWYRSPEVLLGSARYSTPVDIWSIGTIFAELATKKPLFHGDSEIDQLFRIFRALGTPNNEVWPEVESLQDYKNTFPKWKPGSLASHVKNLDENGLDLLSKMLVYDPAKRISGKMALKHPYFDDLDNQIKKM.

An N-acetylmethionine modification is found at Met1. A Phosphotyrosine; by PKR modification is found at Tyr4. In terms of domain architecture, Protein kinase spans Tyr4 to Phe287. N6-acetyllysine; alternate is present on residues Lys6 and Lys9. Glycyl lysine isopeptide (Lys-Gly) (interchain with G-Cter in SUMO2); alternate cross-links involve residues Lys6 and Lys9. Ile10–Val18 contacts ATP. A Phosphothreonine; by PKMYT1 modification is found at Thr14. Position 15 is a phosphotyrosine; by PKMYT1, WEE1, WEE2 and PKC/PRKCD (Tyr15). A Phosphotyrosine; by WEE1 and WEE2 modification is found at Tyr15. Phosphotyrosine is present on Tyr19. Lys20 participates in a covalent cross-link: Glycyl lysine isopeptide (Lys-Gly) (interchain with G-Cter in SUMO2). Lys33 provides a ligand contact to ATP. Ser39 carries the phosphoserine modification. A Phosphotyrosine modification is found at Tyr77. Asp128 serves as the catalytic Proton acceptor. A Glycyl lysine isopeptide (Lys-Gly) (interchain with G-Cter in SUMO2) cross-link involves residue Lys139. The residue at position 141 (Thr141) is a Phosphothreonine. The residue at position 161 (Thr161) is a Phosphothreonine; by CAK. At Ser178 the chain carries Phosphoserine. Phosphothreonine is present on Thr222. N6-succinyllysine is present on Lys245. At Ser248 the chain carries Phosphoserine.

Belongs to the protein kinase superfamily. CMGC Ser/Thr protein kinase family. CDC2/CDKX subfamily. In terms of assembly, forms a stable but non-covalent complex with a regulatory subunit and with a cyclin. Interacts with cyclins-B (CCNB1, CCNB2 and CCNB3) to form a serine/threonine kinase holoenzyme complex also known as maturation promoting factor (MPF). The cyclin subunit imparts substrate specificity to the complex. Can also form CDK1-cylin-D and CDK1-cyclin-E complexes that phosphorylate RB1 in vitro. Binds to RB1 and other transcription factors such as FOXO1 and RUNX2. Promotes G2-M transition when in complex with a cyclin-B. Interacts with DLGAP5. Binds to the CDK inhibitors CDKN1A/p21 and CDKN1B/p27. Isoform 2 is unable to complex with cyclin-B1 and also fails to bind to CDKN1A/p21. Interacts with catalytically active CCNB1 and RALBP1 during mitosis to form an endocytotic complex during interphase. Associates with cyclins-A and B1 during S-phase in regenerating hepatocytes. Interacts with FANCC. Interacts with CEP63; this interaction recruits CDK1 to centrosomes. Interacts with CENPA. Interacts with NR1D1. Interacts with proteasome subunit PSMA8; to participate in meiosis progression during spermatogenesis. Phosphorylation at Thr-161 by CAK/CDK7 activates kinase activity. Phosphorylation at Thr-14 and Tyr-15 by PKMYT1 prevents nuclear translocation. Phosphorylation at Tyr-15 by WEE1 and WEE2 inhibits the protein kinase activity and acts as a negative regulator of entry into mitosis (G2 to M transition). Phosphorylation by PKMYT1 and WEE1 takes place during mitosis to keep CDK1-cyclin-B complexes inactive until the end of G2. By the end of G2, PKMYT1 and WEE1 are inactivated, but CDC25A and CDC25B are activated. Dephosphorylation by active CDC25A and CDC25B at Thr-14 and Tyr-15, leads to CDK1 activation at the G2-M transition. Phosphorylation at Tyr-15 by WEE2 during oogenesis is required to maintain meiotic arrest in oocytes during the germinal vesicle (GV) stage, a long period of quiescence at dictyate prophase I, leading to prevent meiotic reentry. Phosphorylation by WEE2 is also required for metaphase II exit during egg activation to ensure exit from meiosis in oocytes and promote pronuclear formation. Phosphorylated at Tyr-4 by PKR/EIF2AK2 upon genotoxic stress. This phosphorylation triggers CDK1 polyubiquitination and subsequent proteolysis, thus leading to G2 arrest. In response to UV irradiation, phosphorylation at Tyr-15 by PRKCD activates the G2/M DNA damage checkpoint. Post-translationally, polyubiquitinated upon genotoxic stress.

The protein resides in the nucleus. Its subcellular location is the cytoplasm. It localises to the mitochondrion. It is found in the cytoskeleton. The protein localises to the microtubule organizing center. The protein resides in the centrosome. Its subcellular location is the spindle. It carries out the reaction L-seryl-[protein] + ATP = O-phospho-L-seryl-[protein] + ADP + H(+). It catalyses the reaction L-threonyl-[protein] + ATP = O-phospho-L-threonyl-[protein] + ADP + H(+). The catalysed reaction is [DNA-directed RNA polymerase] + ATP = phospho-[DNA-directed RNA polymerase] + ADP + H(+). Its activity is regulated as follows. Phosphorylation at Thr-14 or Tyr-15 inactivates the enzyme, while phosphorylation at Thr-161 activates it. Activated through a multistep process; binding to cyclin-B is required for relocation of cyclin-kinase complexes to the nucleus, activated by CAK/CDK7-mediated phosphorylation on Thr-161, and CDC25-mediated dephosphorylation of inhibitory phosphorylation on Thr-14 and Tyr-15. Activity is restricted during S-phase in an ATR-dependent manner to prevent premature entry into G2. Repressed by the CDK inhibitors CDKN1A/p21 and CDKN1B/p27 during the G1 phase and by CDKN1A/p21 at the G1-S checkpoint upon DNA damage. Transient activation by rapid and transient dephosphorylation at Tyr-15 triggered by TGFB1. Plays a key role in the control of the eukaryotic cell cycle by modulating the centrosome cycle as well as mitotic onset; promotes G2-M transition via association with multiple interphase cyclins. Phosphorylates PARVA/actopaxin, APC, AMPH, APC, BARD1, Bcl-xL/BCL2L1, BRCA2, CALD1, CASP8, CDC7, CDC20, CDC25A, CDC25C, CC2D1A, CENPA, CSNK2 proteins/CKII, FZR1/CDH1, CDK7, CEBPB, CHAMP1, DMD/dystrophin, EEF1 proteins/EF-1, EZH2, KIF11/EG5, EGFR, FANCG, FOS, GFAP, GOLGA2/GM130, GRASP1, UBE2A/hHR6A, HIST1H1 proteins/histone H1, HMGA1, HIVEP3/KRC, KAT5, LMNA, LMNB, LBR, MKI67, LATS1, MAP1B, MAP4, MARCKS, MCM2, MCM4, MKLP1, MLST8, MYB, NEFH, NFIC, NPC/nuclear pore complex, PITPNM1/NIR2, NPM1, NCL, NUCKS1, NPM1/numatrin, ORC1, PRKAR2A, EEF1E1/p18, EIF3F/p47, p53/TP53, NONO/p54NRB, PAPOLA, PLEC/plectin, RB1, TPPP, UL40/R2, RAB4A, RAP1GAP, RBBP8/CtIP, RCC1, RPS6KB1/S6K1, KHDRBS1/SAM68, ESPL1, SKI, BIRC5/survivin, STIP1, TEX14, beta-tubulins, MAPT/TAU, NEDD1, VIM/vimentin, TK1, FOXO1, RUNX1/AML1, SAMHD1, SIRT2, CGAS, ZAR1 and RUNX2. CDK1/CDC2-cyclin-B controls pronuclear union in interphase fertilized eggs. Essential for early stages of embryonic development. During G2 and early mitosis, CDC25A/B/C-mediated dephosphorylation activates CDK1/cyclin complexes which phosphorylate several substrates that trigger at least centrosome separation, Golgi dynamics, nuclear envelope breakdown and chromosome condensation. Once chromosomes are condensed and aligned at the metaphase plate, CDK1 activity is switched off by WEE1- and PKMYT1-mediated phosphorylation to allow sister chromatid separation, chromosome decondensation, reformation of the nuclear envelope and cytokinesis. Phosphorylates KRT5 during prometaphase and metaphase. Inactivated by PKR/EIF2AK2- and WEE1-mediated phosphorylation upon DNA damage to stop cell cycle and genome replication at the G2 checkpoint thus facilitating DNA repair. Reactivated after successful DNA repair through WIP1-dependent signaling leading to CDC25A/B/C-mediated dephosphorylation and restoring cell cycle progression. Catalyzes lamin (LMNA, LMNB1 and LMNB2) phosphorylation at the onset of mitosis, promoting nuclear envelope breakdown. In proliferating cells, CDK1-mediated FOXO1 phosphorylation at the G2-M phase represses FOXO1 interaction with 14-3-3 proteins and thereby promotes FOXO1 nuclear accumulation and transcription factor activity, leading to cell death of postmitotic neurons. The phosphorylation of beta-tubulins regulates microtubule dynamics during mitosis. NEDD1 phosphorylation promotes PLK1-mediated NEDD1 phosphorylation and subsequent targeting of the gamma-tubulin ring complex (gTuRC) to the centrosome, an important step for spindle formation. In addition, CC2D1A phosphorylation regulates CC2D1A spindle pole localization and association with SCC1/RAD21 and centriole cohesion during mitosis. The phosphorylation of Bcl-xL/BCL2L1 after prolongated G2 arrest upon DNA damage triggers apoptosis. In contrast, CASP8 phosphorylation during mitosis prevents its activation by proteolysis and subsequent apoptosis. This phosphorylation occurs in cancer cell lines, as well as in primary breast tissues and lymphocytes. EZH2 phosphorylation promotes H3K27me3 maintenance and epigenetic gene silencing. CALD1 phosphorylation promotes Schwann cell migration during peripheral nerve regeneration. CDK1-cyclin-B complex phosphorylates NCKAP5L and mediates its dissociation from centrosomes during mitosis. Regulates the amplitude of the cyclic expression of the core clock gene BMAL1 by phosphorylating its transcriptional repressor NR1D1, and this phosphorylation is necessary for SCF(FBXW7)-mediated ubiquitination and proteasomal degradation of NR1D1. Phosphorylates EML3 at 'Thr-881' which is essential for its interaction with HAUS augmin-like complex and TUBG1. Phosphorylates CGAS during mitosis, leading to its inhibition, thereby preventing CGAS activation by self DNA during mitosis. Phosphorylates SKA3 during mitosis which promotes SKA3 binding to the NDC80 complex and anchoring of the SKA complex to kinetochores, to enable stable attachment of mitotic spindle microtubules to kinetochores. This Rattus norvegicus (Rat) protein is Cyclin-dependent kinase 1 (Cdk1).